Here is a 237-residue protein sequence, read N- to C-terminus: MVKEECKALLDALSRVTACYRHMVLTIGGTSDSQNLREELKKTRQKAQELAVANRNKLTTVLRDKTVSKEDKAEFERLWVIFSTCLEILEIDMRRALELGHEFPLNVPKKHLIQTGMSGGTSGVAARAMSVQNMKYEAEHNIDVVDLKDLENEINQVGEMMYEMEMKVNVPQWTVEAKQDPGAELKSTISVGASSIGMISVEENKSFCDISKVLAGIIFSAVLIIAIVLAVCVVKLS.

The Cytoplasmic portion of the chain corresponds to 1-212; sequence MVKEECKALL…ENKSFCDISK (212 aa). Coiled coils occupy residues 29–58 and 135–169; these read GTSD…RNKL and KYEA…MKVN. The helical; Anchor for type IV membrane protein transmembrane segment at 213–233 threads the bilayer; sequence VLAGIIFSAVLIIAIVLAVCV. The Extracellular portion of the chain corresponds to 234–237; the sequence is VKLS.

The protein belongs to the RGS7BP/RGS9BP family. Expressed in a variety of neuronal tissues, particularly in sensory cells including inner ear hair cells, photoreceptors and dorsal root ganglion neurons.

It localises to the membrane. Regulator of G protein-coupled receptor (GPCR) signaling. Probably acts by regulating the activity of some 'R7' family protein (RGS6, RGS7, RGS9 and/or RGS11). The sequence is that of Regulator of G-protein signaling 9-binding protein (RGS9BP) from Gallus gallus (Chicken).